The primary structure comprises 302 residues: Oxygen-dependent coproporphyrinogen-III oxidase (302 aa).

Position 94 (serine 94) interacts with substrate. Residues histidine 98 and histidine 108 each coordinate a divalent metal cation. The Proton donor role is filled by histidine 108. A substrate-binding site is contributed by 110-112 (NVR). Histidine 147 and histidine 177 together coordinate a divalent metal cation. Positions 242-277 (YVEFNLVYDRGTLFGLQTGGRTESILMSMPPLVRWQ) are important for dimerization. Residue 260-262 (GGR) coordinates substrate.

It belongs to the aerobic coproporphyrinogen-III oxidase family. In terms of assembly, homodimer. The cofactor is a divalent metal cation.

The protein localises to the cytoplasm. The catalysed reaction is coproporphyrinogen III + O2 + 2 H(+) = protoporphyrinogen IX + 2 CO2 + 2 H2O. It functions in the pathway porphyrin-containing compound metabolism; protoporphyrin-IX biosynthesis; protoporphyrinogen-IX from coproporphyrinogen-III (O2 route): step 1/1. Functionally, involved in the heme biosynthesis. Catalyzes the aerobic oxidative decarboxylation of propionate groups of rings A and B of coproporphyrinogen-III to yield the vinyl groups in protoporphyrinogen-IX. The sequence is that of Oxygen-dependent coproporphyrinogen-III oxidase from Shewanella oneidensis (strain ATCC 700550 / JCM 31522 / CIP 106686 / LMG 19005 / NCIMB 14063 / MR-1).